Here is a 251-residue protein sequence, read N- to C-terminus: NADPH-dependent oxidoreductase (251 aa).

Belongs to the flavin oxidoreductase frp family. FMN is required as a cofactor.

Its function is as follows. Reduces FMN, organic nitro compounds and disulfide DTNB. Involved in maintenance of the cellular redox state and the disulfide stress response. The chain is NADPH-dependent oxidoreductase (nfrA) from Staphylococcus epidermidis (strain ATCC 12228 / FDA PCI 1200).